The sequence spans 421 residues: Testin (421 aa).

Residues 92 to 199 (MILTNPVAAK…GDVKLPCEMD (108 aa)) form the PET domain. A disordered region spans residues 133 to 164 (EKQPVAGSEGAQYRKKQLAKQLPAHDQDPSKC). Basic and acidic residues predominate over residues 155 to 164 (PAHDQDPSKC). 3 consecutive LIM zinc-binding domains span residues 234–297 (YSCY…CDSE), 299–359 (PRCA…NHAV), and 362–421 (QGCH…KMMS).

This sequence belongs to the prickle / espinas / testin family. Interacts via LIM domain 1 with ZYX. Interacts (via LIM domain 3) with ENAH and VASP. Interacts with ALKBH4, talin, actin, alpha-actinin, GRIP1 and PXN. Interacts (via LIM domain 2) with ACTL7A (via N-terminus). Heterodimer with ACTL7A; the heterodimer interacts with ENAH to form a heterotrimer.

Its subcellular location is the cytoplasm. The protein localises to the cell junction. It localises to the focal adhesion. Functionally, scaffold protein that may play a role in cell adhesion, cell spreading and in the reorganization of the actin cytoskeleton. Plays a role in the regulation of cell proliferation. May act as a tumor suppressor. The protein is Testin (TES) of Aotus nancymaae (Ma's night monkey).